A 332-amino-acid chain; its full sequence is Phosphate acyltransferase (332 aa).

The protein belongs to the PlsX family. Homodimer. Probably interacts with PlsY.

Its subcellular location is the cytoplasm. The catalysed reaction is a fatty acyl-[ACP] + phosphate = an acyl phosphate + holo-[ACP]. It functions in the pathway lipid metabolism; phospholipid metabolism. Its function is as follows. Catalyzes the reversible formation of acyl-phosphate (acyl-PO(4)) from acyl-[acyl-carrier-protein] (acyl-ACP). This enzyme utilizes acyl-ACP as fatty acyl donor, but not acyl-CoA. The protein is Phosphate acyltransferase of Caldanaerobacter subterraneus subsp. tengcongensis (strain DSM 15242 / JCM 11007 / NBRC 100824 / MB4) (Thermoanaerobacter tengcongensis).